A 327-amino-acid polypeptide reads, in one-letter code: Delta(6)-protoilludene synthase HYPSUDRAFT_138665 (327 aa).

D79, N215, S219, and E223 together coordinate Mg(2+). The short motif at 79 to 83 is the DDXXD motif element; the sequence is DEHTD. (2E,6E)-farnesyl diphosphate contacts are provided by R304 and Y305.

It belongs to the terpene synthase family. Mg(2+) is required as a cofactor.

It carries out the reaction (2E,6E)-farnesyl diphosphate = Delta(6)-protoilludene + diphosphate. In terms of biological role, terpene cyclase that catalyzes the cyclization of farnesyl diphosphate (FPP) to delta(6)-protoilludene. In Hypholoma sublateritium (strain FD-334 SS-4), this protein is Delta(6)-protoilludene synthase HYPSUDRAFT_138665.